The primary structure comprises 269 residues: Shikimate dehydrogenase (NADP(+)) (269 aa).

Shikimate-binding positions include Ser-17–Ser-19 and Thr-64. The active-site Proton acceptor is the Lys-68. Asp-80 provides a ligand contact to NADP(+). Residues Asn-89 and Asp-105 each contribute to the shikimate site. NADP(+) is bound by residues Gly-130 to Ala-134, Asn-154 to Lys-159, and Met-213. Tyr-215 contacts shikimate. Gly-237 contributes to the NADP(+) binding site.

Belongs to the shikimate dehydrogenase family. In terms of assembly, homodimer.

The enzyme catalyses shikimate + NADP(+) = 3-dehydroshikimate + NADPH + H(+). It functions in the pathway metabolic intermediate biosynthesis; chorismate biosynthesis; chorismate from D-erythrose 4-phosphate and phosphoenolpyruvate: step 4/7. Its function is as follows. Involved in the biosynthesis of the chorismate, which leads to the biosynthesis of aromatic amino acids. Catalyzes the reversible NADPH linked reduction of 3-dehydroshikimate (DHSA) to yield shikimate (SA). The chain is Shikimate dehydrogenase (NADP(+)) from Neisseria gonorrhoeae (strain ATCC 700825 / FA 1090).